A 354-amino-acid polypeptide reads, in one-letter code: GDSL esterase/lipase At5g03820 (354 aa).

The first 24 residues, 1-24 (MKMFIIMLMTFSVIACFYAGVGTG), serve as a signal peptide directing secretion. Catalysis depends on S37, which acts as the Nucleophile. N-linked (GlcNAc...) asparagine glycosylation is found at N66, N100, N237, N256, N257, N261, and N321. Residues D329 and H332 contribute to the active site.

Belongs to the 'GDSL' lipolytic enzyme family.

The protein localises to the secreted. The protein is GDSL esterase/lipase At5g03820 of Arabidopsis thaliana (Mouse-ear cress).